The chain runs to 178 residues: Caveolin-1 (178 aa).

S2 is modified (N-acetylserine). S2 bears the Phosphoserine mark. The interval 2 to 94 is required for homooligomerization; it reads SGGKYVDSEG…WKASFTTFTV (93 aa). Residues 2-104 are Cytoplasmic-facing; that stretch reads SGGKYVDSEG…TKYWFYRLLS (103 aa). K5 is subject to N6-acetyllysine; alternate. Residue K5 forms a Glycyl lysine isopeptide (Lys-Gly) (interchain with G-Cter in ubiquitin); alternate linkage. A Phosphotyrosine modification is found at Y6. Residue S9 is modified to Phosphoserine. Position 14 is a phosphotyrosine; by ABL1 (Y14). At Y25 the chain carries Phosphotyrosine. Residues K26, K30, K39, K47, and K57 each participate in a glycyl lysine isopeptide (Lys-Gly) (interchain with G-Cter in ubiquitin) cross-link. The interaction with CAVIN3 stretch occupies residues 82–94; sequence DGIWKASFTTFTV. Positions 105–125 form an intramembrane region, helical; sequence ALFGIPMALIWGIYFAILSFL. Topologically, residues 126 to 178 are cytoplasmic; the sequence is HIWAVVPCIKSFLIEIQCISRVYSIYVHTFCDPLFEAIGKIFSNIRINMQKEI. Positions 131–142 are interacts with SPRY1, SPRY2, SPRY3 and SPRY4; sequence VPCIKSFLIEIQ. S-palmitoyl cysteine attachment occurs at residues C133, C143, and C156. The interval 149–160 is interacts with SPRY1, SPRY2, and SPRY4; it reads SIYVHTFCDPLF. Residues 167–178 form an interacts with SPRY1, SPRY2, SPRY3 and SPRY4 region; sequence FSNIRINMQKEI.

The protein belongs to the caveolin family. Homooligomer. Interacts with GLIPR2. Interacts with NOSTRIN. Interacts with SNAP25 and STX1A. Interacts (via the N-terminus) with DPP4; the interaction is direct. Interacts with CTNNB1, CDH1 and JUP. Interacts with PACSIN2; this interaction induces membrane tubulation. Interacts with SLC7A9. Interacts with BMX and BTK. Interacts with TGFBR1. Interacts with CAVIN3 (via leucine-zipper domain) in a cholesterol-sensitive manner. Interacts with CAVIN1. Interacts with EHD2 in a cholesterol-dependent manner. Forms a ternary complex with UBXN6 and VCP; mediates CAV1 targeting to lysosomes for degradation. Interacts with ABCG1; this interaction regulates ABCG1-mediated cholesterol efflux. Interacts with NEU3; this interaction enhances NEU3 sialidase activity within caveola. Interacts (via C-terminus) with SPRY1, SPRY2 (via C-terminus), SPRY3, and SPRY4. Interacts with IGFBP5; this interaction allows trafficking of IGFBP5 from the plasma membrane to the nucleus. Phosphorylated at Tyr-14 by ABL1 in response to oxidative stress. In terms of processing, ubiquitinated. Undergo monoubiquitination and multi- and/or polyubiquitination. Monoubiquitination of N-terminal lysines promotes integration in a ternary complex with UBXN6 and VCP which promotes oligomeric CAV1 targeting to lysosomes for degradation. Ubiquitinated by ZNRF1; leading to degradation and modulation of the TLR4-mediated immune response.

Its subcellular location is the golgi apparatus membrane. It is found in the cell membrane. The protein resides in the membrane. It localises to the caveola. The protein localises to the membrane raft. In terms of biological role, may act as a scaffolding protein within caveolar membranes. Forms a stable heterooligomeric complex with CAV2 that targets to lipid rafts and drives caveolae formation. Mediates the recruitment of CAVIN proteins (CAVIN1/2/3/4) to the caveolae. Interacts directly with G-protein alpha subunits and can functionally regulate their activity. Involved in the costimulatory signal essential for T-cell receptor (TCR)-mediated T-cell activation. Its binding to DPP4 induces T-cell proliferation and NF-kappa-B activation in a T-cell receptor/CD3-dependent manner. Recruits CTNNB1 to caveolar membranes and may regulate CTNNB1-mediated signaling through the Wnt pathway. Negatively regulates TGFB1-mediated activation of SMAD2/3 by mediating the internalization of TGFBR1 from membrane rafts leading to its subsequent degradation. Binds 20(S)-hydroxycholesterol (20(S)-OHC). In Muntiacus muntjak (Barking deer), this protein is Caveolin-1 (CAV1).